A 429-amino-acid chain; its full sequence is Endoglucanase type C (429 aa).

A signal peptide spans 1–18; that stretch reads MKSLSLILSALAVQVAVA. Position 19 is a pyrrolidone carboxylic acid (Gln19). Intrachain disulfides connect Cys36–Cys42, Cys66–Cys88, Cys78–Cys84, Cys156–Cys383, Cys190–Cys213, Cys194–Cys212, Cys233–Cys252, Cys241–Cys246, and Cys257–Cys333. An N-linked (GlcNAc...) asparagine glycan is attached at Asn74. The active-site Nucleophile is the Glu215. Glu220 serves as the catalytic Proton donor. N-linked (GlcNAc...) asparagine glycans are attached at residues Asn265 and Asn318.

The protein belongs to the glycosyl hydrolase 7 (cellulase C) family.

It catalyses the reaction Endohydrolysis of (1-&gt;4)-beta-D-glucosidic linkages in cellulose, lichenin and cereal beta-D-glucans.. The protein is Endoglucanase type C of Fusarium oxysporum (Fusarium vascular wilt).